Reading from the N-terminus, the 353-residue chain is S-adenosylmethionine:tRNA ribosyltransferase-isomerase (353 aa).

This sequence belongs to the QueA family. As to quaternary structure, monomer.

The protein localises to the cytoplasm. The enzyme catalyses 7-aminomethyl-7-carbaguanosine(34) in tRNA + S-adenosyl-L-methionine = epoxyqueuosine(34) in tRNA + adenine + L-methionine + 2 H(+). The protein operates within tRNA modification; tRNA-queuosine biosynthesis. Transfers and isomerizes the ribose moiety from AdoMet to the 7-aminomethyl group of 7-deazaguanine (preQ1-tRNA) to give epoxyqueuosine (oQ-tRNA). The protein is S-adenosylmethionine:tRNA ribosyltransferase-isomerase of Dinoroseobacter shibae (strain DSM 16493 / NCIMB 14021 / DFL 12).